The following is a 500-amino-acid chain: L-arabinose isomerase (500 aa).

Residues glutamate 306, glutamate 333, histidine 349, and histidine 448 each contribute to the Mn(2+) site.

This sequence belongs to the arabinose isomerase family. Mn(2+) serves as cofactor.

The catalysed reaction is beta-L-arabinopyranose = L-ribulose. Its pathway is carbohydrate degradation; L-arabinose degradation via L-ribulose; D-xylulose 5-phosphate from L-arabinose (bacterial route): step 1/3. In terms of biological role, catalyzes the conversion of L-arabinose to L-ribulose. The protein is L-arabinose isomerase of Saccharophagus degradans (strain 2-40 / ATCC 43961 / DSM 17024).